Consider the following 660-residue polypeptide: MAPFPDEVDLFTGPHWRMKQLVGRYCEKLSNTNFSSNTDFLALLQSLYETFKEFKMHEQIENEYIIGLLQQRSQTVFNVHSDNKLSEMLVLFEKGMKNNEYEQLNYAQQLKERLEAFTSDFLPHMKEEEEVFQPMLMEYFTYDELKDIKKKVIAQHCSQKDTAELLRGFSLWNKAEELQKVFKYSVDEKIERDSKNRKSSASICNLPPEVMLNIFSYLNPQDLCRCSQVNTKWAQLARTGSLWRHLYPVLWARGDWYSGPPTHLDNEPDEDWISRRKDESRAYQEWDEDADIDESEETGEDDPSISVAQREKELLNSLVHYILPYIGHSVKTLVLAYSSATSNKVIRQILEYCPNMEHLDLTQTDISDSAFNGWCFGACQTLRHIDLSGCEKITDSALEKLSVALGMPLAHKKRLLKCYRNNRTVKDIRNQMRCGSLAQITGESGIYSDYSSSQIWILNSGNLGDIEDAADWKFRTTDGLGVLEMTPNLTCFSNGCCSRAVPGRWTNVIRQEHCKAAPLNYCGHTLCGNTLRTIQALPGSNIGTKTLQSEIRDICPGSAKLDQQVARVLQFLSLSGCHQITDHGLRVLTIGGGLPNLEHLNLSGCLNVTGSGLQDLVSACPSLNDEHFYYCDNISGPHAATASGCQNLQCGFRACCRSGE.

Positions 1–157 are hemerythrin-like; sequence MAPFPDEVDL…IKKKVIAQHC (157 aa). Residues His15, His57, Glu58, Glu61, His80, His124, and Glu127 each coordinate Fe(3+). The F-box domain occupies 200-246; it reads SASICNLPPEVMLNIFSYLNPQDLCRCSQVNTKWAQLARTGSLWRHL. The segment at 283–305 is disordered; it reads YQEWDEDADIDESEETGEDDPSI. Acidic residues predominate over residues 285–303; the sequence is EWDEDADIDESEETGEDDP. LRR repeat units follow at residues 311 to 337, 338 to 362, 363 to 389, 390 to 417, 551 to 576, 577 to 604, 605 to 630, and 631 to 649; these read EKELLNSLVHYILPYIGHSVKTLVLAY, SSATSNKVIRQILEYCPNMEHLDLT, QTDISDSAFNGWCFGACQTLRHIDLSG, CEKITDSALEKLSVALGMPLAHKKRLLK, IRDICPGSAKLDQQVARVLQFLSLSG, CHQITDHGLRVLTIGGGLPNLEHLNLSG, CLNVTGSGLQDLVSACPSLNDEHFYY, and CDNISGPHAATASGCQNLQ. The [2Fe-2S] cluster site is built by Cys631, Cys645, Cys655, and Cys656.

Part of a SCF (SKP1-cullin-F-box) protein ligase complex. [2Fe-2S] cluster is required as a cofactor. In terms of processing, ubiquitinated upon iron and oxygen depletion, leading to its degradation by the proteasome. Ubiquitination is regulated by the hemerythrin-like region that acts as an oxygen and iron sensor.

The protein localises to the cytoplasm. It is found in the perinuclear region. The protein resides in the nucleus. The protein operates within protein modification; protein ubiquitination. In terms of biological role, component of some SCF (SKP1-cullin-F-box) protein ligase complex that plays a central role in iron homeostasis by promoting the ubiquitination and subsequent degradation of ireb2/irp2. Upon high iron and oxygen level, it specifically recognizes and binds ireb2/irp2, promoting its ubiquitination and degradation by the proteasome. In Xenopus tropicalis (Western clawed frog), this protein is F-box/LRR-repeat protein 5 (fbxl5).